The chain runs to 81 residues: Cytochrome b559 subunit alpha (81 aa).

The helical transmembrane segment at 21-35 (VIHSITIPMLFIAGW) threads the bilayer. His-23 is a binding site for heme.

The protein belongs to the PsbE/PsbF family. As to quaternary structure, heterodimer of an alpha subunit and a beta subunit. PSII is composed of 1 copy each of membrane proteins PsbA, PsbB, PsbC, PsbD, PsbE, PsbF, PsbH, PsbI, PsbJ, PsbK, PsbL, PsbM, PsbT, PsbX, PsbY, PsbZ, Psb30/Ycf12, peripheral proteins PsbO, CyanoQ (PsbQ), PsbU, PsbV and a large number of cofactors. It forms dimeric complexes. The cofactor is heme b.

It is found in the cellular thylakoid membrane. Its function is as follows. This b-type cytochrome is tightly associated with the reaction center of photosystem II (PSII). PSII is a light-driven water:plastoquinone oxidoreductase that uses light energy to abstract electrons from H(2)O, generating O(2) and a proton gradient subsequently used for ATP formation. It consists of a core antenna complex that captures photons, and an electron transfer chain that converts photonic excitation into a charge separation. This Crocosphaera subtropica (strain ATCC 51142 / BH68) (Cyanothece sp. (strain ATCC 51142)) protein is Cytochrome b559 subunit alpha.